Reading from the N-terminus, the 881-residue chain is Probable alpha/beta-glucosidase agdC (881 aa).

A signal peptide spans 1-14 (MLRSLLLLAPLVGA). N-linked (GlcNAc...) asparagine glycans are attached at residues N171, N293, and N373. D422 functions as the Nucleophile in the catalytic mechanism. Residue E425 is part of the active site. The disordered stretch occupies residues 440-485 (YARDNDLPPAAPPVRPSNPRPLPGFPGDFQPSSSSKRSTKGSKVGL). Positions 448 to 463 (PAAPPVRPSNPRPLPG) are enriched in pro residues. Residue N506 is glycosylated (N-linked (GlcNAc...) asparagine). D571 serves as the catalytic Proton donor. N-linked (GlcNAc...) asparagine glycosylation is found at N572, N608, and N742.

It belongs to the glycosyl hydrolase 31 family.

The protein resides in the secreted. It catalyses the reaction Hydrolysis of terminal, non-reducing (1-&gt;4)-linked alpha-D-glucose residues with release of alpha-D-glucose.. The catalysed reaction is Hydrolysis of terminal, non-reducing beta-D-glucosyl residues with release of beta-D-glucose.. Glucosidase involved in the degradation of cellulosic biomass. Has both alpha- and beta-glucosidase activity. This is Probable alpha/beta-glucosidase agdC (agdC) from Aspergillus fumigatus (strain CBS 144.89 / FGSC A1163 / CEA10) (Neosartorya fumigata).